A 299-amino-acid chain; its full sequence is ATP phosphoribosyltransferase (299 aa).

Belongs to the ATP phosphoribosyltransferase family. Long subfamily. It depends on Mg(2+) as a cofactor.

The protein localises to the cytoplasm. The catalysed reaction is 1-(5-phospho-beta-D-ribosyl)-ATP + diphosphate = 5-phospho-alpha-D-ribose 1-diphosphate + ATP. Its pathway is amino-acid biosynthesis; L-histidine biosynthesis; L-histidine from 5-phospho-alpha-D-ribose 1-diphosphate: step 1/9. With respect to regulation, feedback inhibited by histidine. In terms of biological role, catalyzes the condensation of ATP and 5-phosphoribose 1-diphosphate to form N'-(5'-phosphoribosyl)-ATP (PR-ATP). Has a crucial role in the pathway because the rate of histidine biosynthesis seems to be controlled primarily by regulation of HisG enzymatic activity. This chain is ATP phosphoribosyltransferase, found in Campylobacter jejuni subsp. jejuni serotype O:6 (strain 81116 / NCTC 11828).